We begin with the raw amino-acid sequence, 469 residues long: Desmin (469 aa).

Residues 2–107 form a head region; the sequence is SQAYSSSQRV…QEFLTTRTNE (106 aa). Phosphoserine; by CDK1 is present on serine 7. Position 12 is a phosphoserine; by AURKB (serine 12). Residue arginine 16 is modified to Omega-N-methylarginine. Phosphothreonine; by AURKB and ROCK1 is present on threonine 17. A phosphoserine; by CDK1 mark is found at serine 28 and serine 32. Arginine 37 bears the Asymmetric dimethylarginine; alternate mark. Omega-N-methylarginine; alternate is present on arginine 37. Phosphoserine is present on serine 45. ADP-ribosylarginine is present on arginine 58. Residue serine 60 is modified to Phosphoserine; by AURKB. Arginine 70 is modified (omega-N-methylarginine). Threonine 76 is subject to Phosphothreonine; by ROCK1. Serine 81 carries the phosphoserine modification. Positions 107–415 constitute an IF rod domain; sequence EKVELQELND…KLLEGEESRI (309 aa). A coil 1A region spans residues 108–140; sequence KVELQELNDRFANYIEKVRFLEQQNAALAAEVN. Positions 141–150 are linker 1; that stretch reads RLKGREPTRV. The tract at residues 151–251 is coil 1B; sequence AEIYEEELRE…HEEEIRELQA (101 aa). A linker 12 region spans residues 252-267; sequence QLQEQQVQVEMDMSKP. The segment at 267-414 is interaction with NEB; it reads PDLTAALRDI…RKLLEGEESR (148 aa). Residues 268 to 286 form a coil 2A region; the sequence is DLTAALRDIRAQYETIAAK. The linker 2 stretch occupies residues 287–294; that stretch reads NISEAEEW. Phosphoserine is present on residues serine 289, serine 357, serine 360, and serine 423. The segment at 295-411 is coil 2B; it reads YKSKVSDLTQ…ATYRKLLEGE (117 aa). The tract at residues 412–469 is tail; that stretch reads ESRINLPIQTYSALNFRETSPEQRGSEVHTKKTVMIKTIETRDGEVVSEATQQQHEVL. The interaction with CRYAB stretch occupies residues 437–452; sequence SEVHTKKTVMIKTIET.

This sequence belongs to the intermediate filament family. As to quaternary structure, homomer. Interacts with DST. Interacts with MTM1. Interacts with EPPK1; interaction is dependent of higher-order structure of intermediate filament. Interacts with CRYAB. Interacts with NEB (via nebulin repeats 160-164). Interacts (via rod region) with NEBL (via nebulin repeats 1-5). Interacts with ASB2; the interaction targets DES for proteasomal degradation. Interacts with PKP1. Interacts with FLII. Post-translationally, ADP-ribosylation prevents ability to form intermediate filaments. Phosphorylation at Ser-7, Ser-28 and Ser-32 by CDK1, phosphorylation at Ser-60 by AURKB and phosphorylation at Thr-76 by ROCK1 contribute to efficient separation of desmin intermediate filaments during mitosis. In terms of processing, ubiquitination by a SCF-like complex containing ASB2 leads to proteasomal degradation.

The protein localises to the cytoplasm. It is found in the myofibril. Its subcellular location is the sarcomere. It localises to the z line. The protein resides in the cell membrane. The protein localises to the sarcolemma. It is found in the nucleus. Its subcellular location is the cell tip. It localises to the nucleus envelope. Its function is as follows. Muscle-specific type III intermediate filament essential for proper muscular structure and function. Plays a crucial role in maintaining the structure of sarcomeres, inter-connecting the Z-disks and forming the myofibrils, linking them not only to the sarcolemmal cytoskeleton, but also to the nucleus and mitochondria, thus providing strength for the muscle fiber during activity. In adult striated muscle they form a fibrous network connecting myofibrils to each other and to the plasma membrane from the periphery of the Z-line structures. May act as a sarcomeric microtubule-anchoring protein: specifically associates with detyrosinated tubulin-alpha chains, leading to buckled microtubules and mechanical resistance to contraction. Required for nuclear membrane integrity, via anchoring at the cell tip and nuclear envelope, resulting in maintenance of microtubule-derived intracellular mechanical forces. Contributes to the transcriptional regulation of the NKX2-5 gene in cardiac progenitor cells during a short period of cardiomyogenesis and in cardiac side population stem cells in the adult. Plays a role in maintaining an optimal conformation of nebulette (NEB) on heart muscle sarcomeres to bind and recruit cardiac alpha-actin. The protein is Desmin (DES) of Canis lupus familiaris (Dog).